A 1230-amino-acid chain; its full sequence is SAM and SH3 domain-containing protein 1 (1230 aa).

The segment covering 1–10 (MEEDAGAASP) has biased composition (low complexity). The tract at residues 1 to 30 (MEEDAGAASPAPEPEPEVDPARELEPEAGV) is disordered. Phosphoserine occurs at positions 83 and 241. 2 disordered regions span residues 211–249 (RQSS…EDSV) and 275–337 (KKPS…LDTW). A compositionally biased stretch (basic and acidic residues) spans 275 to 297 (KKPSAEGGEEHVFENSPVQDERS). The span at 324-336 (SLTPSPSSSSLDT) shows a compositional bias: low complexity. S400 bears the Phosphoserine mark. 3 disordered regions span residues 439–566 (PRIS…YDTD), 610–633 (EEKP…SVED), and 705–792 (VDNQ…KSCD). Positions 461–470 (KYSSPVSEQD) are enriched in polar residues. Residues 485–494 (PDSEHVDKPK) show a composition bias toward basic and acidic residues. Low complexity predominate over residues 498-516 (GGSVESLRSSLSGQSSMSG). Residues 517–529 (QTVSTTDSSTSNR) are compositionally biased toward polar residues. The SH3 domain occupies 547-608 (PFCGRARVHT…KFIYVDVLNE (62 aa)). Residues 615–624 (RPTRRRKKGR) show a composition bias toward basic residues. One can recognise an SAM 1 domain in the interval 626–690 (SQPKSVEDLL…LTAVELLQEY (65 aa)). Polar residues predominate over residues 737–758 (VLSTKSSTESNLKSFTRSQPGN). The span at 768-779 (GEVRKQGEEGRL) shows a compositional bias: basic and acidic residues. A phosphoserine mark is found at S813 and S831. Disordered stretches follow at residues 818-875 (EGPE…LPRG) and 915-1045 (PPQC…PWLA). The interval 844-852 (NVPTEMPET) is required for interaction with TRAF6. Over residues 852–868 (TCSQNVPEVPQKTSACT) the composition is skewed to polar residues. Over residues 940–956 (GLRKGHDHHPLGTKEGV) the composition is skewed to basic and acidic residues. The span at 962-972 (APETRTQSRHP) shows a compositional bias: polar residues. Positions 1008–1019 (SPASPVSPSDCP) are enriched in low complexity. Positions 1160 to 1224 (GCVASMSDWL…ITAARLFKLP (65 aa)) constitute an SAM 2 domain.

Interacts with GNAS. Interacts with IQGAP1. Interacts with TRAF6 (via C-terminus); the interaction is LPS-dependent. Interacts with MAP3K7, CHUK and IKBKB. As to expression, expressed in the microvascular endothelium of various organs, as well as in parenchymal cells. Expressed in the endothelium but not lymphoid cells of spleen and thymus.

It localises to the cytoplasm. Its function is as follows. Is a positive regulator of NF-kappa-B signaling downstream of TLR4 activation. It acts as a scaffold molecule to assemble a molecular complex that includes TRAF6, MAP3K7, CHUK and IKBKB, thereby facilitating NF-kappa-B signaling activation. Regulates TRAF6 and MAP3K7 ubiquitination. Involved in the regulation of cell mobility. Regulates lipolysaccharide (LPS)-induced endothelial cell migration. Is involved in the regulation of skin pigmentation through the control of melanocyte migration in the epidermis. The protein is SAM and SH3 domain-containing protein 1 (Sash1) of Mus musculus (Mouse).